The chain runs to 224 residues: Large ribosomal subunit protein uL1c (224 aa).

This sequence belongs to the universal ribosomal protein uL1 family. In terms of assembly, part of the 50S ribosomal subunit.

It is found in the plastid. It localises to the chloroplast. Functionally, binds directly to 23S rRNA. Might be involved in E site tRNA release (Potential). The protein is Large ribosomal subunit protein uL1c (rpl1) of Cyanidioschyzon merolae (strain NIES-3377 / 10D) (Unicellular red alga).